A 692-amino-acid polypeptide reads, in one-letter code: Glycine--tRNA ligase beta subunit (692 aa).

The protein belongs to the class-II aminoacyl-tRNA synthetase family. In terms of assembly, tetramer of two alpha and two beta subunits.

It localises to the cytoplasm. The catalysed reaction is tRNA(Gly) + glycine + ATP = glycyl-tRNA(Gly) + AMP + diphosphate. In Hahella chejuensis (strain KCTC 2396), this protein is Glycine--tRNA ligase beta subunit.